Here is a 179-residue protein sequence, read N- to C-terminus: Large ribosomal subunit protein uL5 (179 aa).

It belongs to the universal ribosomal protein uL5 family. In terms of assembly, part of the 50S ribosomal subunit; part of the 5S rRNA/L5/L18/L25 subcomplex. Contacts the 5S rRNA and the P site tRNA. Forms a bridge to the 30S subunit in the 70S ribosome.

Its function is as follows. This is one of the proteins that bind and probably mediate the attachment of the 5S RNA into the large ribosomal subunit, where it forms part of the central protuberance. In the 70S ribosome it contacts protein S13 of the 30S subunit (bridge B1b), connecting the 2 subunits; this bridge is implicated in subunit movement. Contacts the P site tRNA; the 5S rRNA and some of its associated proteins might help stabilize positioning of ribosome-bound tRNAs. The sequence is that of Large ribosomal subunit protein uL5 from Thermoanaerobacter sp. (strain X514).